Reading from the N-terminus, the 46-residue chain is Protein PsbN (46 aa).

Residues 7 to 27 (ALSVALGVMAVVLGLTGFGVY) form a helical membrane-spanning segment.

The protein belongs to the PsbN family.

Its subcellular location is the cellular thylakoid membrane. May play a role in photosystem I and II biogenesis. The sequence is that of Protein PsbN from Synechococcus sp. (strain CC9902).